Consider the following 162-residue polypeptide: Interleukin-15 (162 aa).

Residues 1–29 (MRISKPHLRSVSIQCYLCLLLNSHFLTEA) form the signal peptide. Positions 30–48 (GIHVFILGCFSAGLPKTEA) are excised as a propeptide. 2 cysteine pairs are disulfide-bonded: Cys83/Cys133 and Cys90/Cys136. Asn127 carries an N-linked (GlcNAc...) asparagine glycan.

The protein belongs to the IL-15/IL-21 family.

It is found in the secreted. In terms of biological role, cytokine that plays a major role in the development of inflammatory and protective immune responses to microbial invaders and parasites by modulating immune cells of both the innate and adaptive immune systems. Stimulates the proliferation of natural killer cells, T-cells and B-cells and promotes the secretion of several cytokines. In monocytes, induces the production of IL8 and monocyte chemotactic protein 1/CCL2, two chemokines that attract neutrophils and monocytes respectively to sites of infection. Unlike most cytokines, which are secreted in soluble form, IL15 is expressed in association with its high affinity IL15RA on the surface of IL15-producing cells and delivers signals to target cells that express IL2RB and IL2RG receptor subunits. Binding to its receptor triggers the phosphorylation of JAK1 and JAK3 and the recruitment and subsequent phosphorylation of signal transducer and activator of transcription-3/STAT3 and STAT5. In mast cells, induces the rapid tyrosine phosphorylation of STAT6 and thereby controls mast cell survival and release of cytokines such as IL4. This Macaca thibetana (Pere David's macaque) protein is Interleukin-15 (IL15).